Consider the following 381-residue polypeptide: Cytochrome b (381 aa).

Transmembrane regions (helical) follow at residues 34–54, 78–99, 114–134, and 179–199; these read FGSL…FLAM, WLIR…YLHI, WNIG…GYVL, and FFAF…IHLL. The heme b site is built by histidine 84 and histidine 98. Heme b-binding residues include histidine 183 and histidine 197. Histidine 202 is a binding site for a ubiquinone. Helical transmembrane passes span 227–247, 289–309, 321–341, and 348–368; these read YKDL…ALFT, LGGV…PLLH, LTQI…WIGG, and FIMV…IIMP.

It belongs to the cytochrome b family. As to quaternary structure, the cytochrome bc1 complex contains 3 respiratory subunits (MT-CYB, CYC1 and UQCRFS1), 2 core proteins (UQCRC1 and UQCRC2) and probably 6 low-molecular weight proteins. Heme b is required as a cofactor.

It is found in the mitochondrion inner membrane. Functionally, component of the ubiquinol-cytochrome c reductase complex (complex III or cytochrome b-c1 complex) that is part of the mitochondrial respiratory chain. The b-c1 complex mediates electron transfer from ubiquinol to cytochrome c. Contributes to the generation of a proton gradient across the mitochondrial membrane that is then used for ATP synthesis. The protein is Cytochrome b (mt-cyb) of Negaprion brevirostris (Lemon shark).